The chain runs to 239 residues: Uridylate kinase (239 aa).

13–16 lines the ATP pocket; sequence KISG. Gly55 serves as a coordination point for UMP. The ATP site is built by Gly56 and Arg60. Residues Asp75 and 136-143 each bind UMP; that span reads LGIPFFTT. ATP-binding residues include Thr163, Tyr169, and Asp172.

It belongs to the UMP kinase family. In terms of assembly, homohexamer.

Its subcellular location is the cytoplasm. It carries out the reaction UMP + ATP = UDP + ADP. The protein operates within pyrimidine metabolism; CTP biosynthesis via de novo pathway; UDP from UMP (UMPK route): step 1/1. With respect to regulation, inhibited by UTP. Its function is as follows. Catalyzes the reversible phosphorylation of UMP to UDP. In Buchnera aphidicola subsp. Cinara cedri (strain Cc), this protein is Uridylate kinase.